Reading from the N-terminus, the 296-residue chain is MYFRGPAVGLTFCCFYLSSYFTNKYVLSVLKFTYPTLFQGWQTLVGGLILHICWKVGWLEINCNSRSDVVLWLPGCALFVGIIYAGSRALSRLPIPVFFTLHNAAEVVSYGFQRLLFREKCPYSKIFSIFLLLLSAGCLPLHDPQFDADGYFWAVIHLFCVGCYKVFKKSQKSGSLSDLDQQYINYVFSVVLLGLASHPTGDLISALEFPFLYFYRFHSGCCASGILGFLLMLASVKLRSNLSSVQHASWNFVAKVITAGLSLIYFQITLTVPLTLCLLAGGLGEAVLVYAERTGV.

The next 10 membrane-spanning stretches (helical) occupy residues 7–29 (AVGL…VLSV), 41–61 (WQTL…WLEI), 67–87 (SDVV…YAGS), 93–113 (LPIP…YGFQ), 126–146 (IFSI…DPQF), 147–167 (DADG…YKVF), 187–207 (VFSV…ISAL), 217–237 (FHSG…ASVK), 248–266 (ASWN…LIYF), and 272–291 (VPLT…LVYA).

It belongs to the nucleotide-sugar transporter family. SLC35A subfamily.

The protein localises to the golgi apparatus. It localises to the cis-Golgi network membrane. Functionally, golgi-localized UDP-N-acetylglucosamine (UDP-GlcNAc) transporter that transports UDP-N-acetylglucosamine into Golgi lumen. The sequence is that of UDP-N-acetylglucosamine transporter TMEM241 homolog (tmem241) from Xenopus laevis (African clawed frog).